The sequence spans 380 residues: Cytochrome b (380 aa).

4 helical membrane-spanning segments follow: residues 34 to 54, 78 to 99, 114 to 134, and 179 to 199; these read FGSLLGLCLMTQILTGLLLAM, WLIRNLHANGASFFFICIYLHI, WNTGVILLLTLMATAFVGYVL, and FFALHFLLPFMIAGLTLIHLT. 2 residues coordinate heme b: H84 and H98. Positions 183 and 197 each coordinate heme b. H202 is a binding site for a ubiquinone. Transmembrane regions (helical) follow at residues 227-247, 289-309, 321-341, and 348-368; these read TKDLLGFLLMIAPLLTLAMFS, LGGVLALAASVLILFLAPFLH, LSQLLFWILVANLLILTWVGS, and FIIIGQIASLTYFTILLILFP.

It belongs to the cytochrome b family. As to quaternary structure, the cytochrome bc1 complex contains 11 subunits: 3 respiratory subunits (MT-CYB, CYC1 and UQCRFS1), 2 core proteins (UQCRC1 and UQCRC2) and 6 low-molecular weight proteins (UQCRH/QCR6, UQCRB/QCR7, UQCRQ/QCR8, UQCR10/QCR9, UQCR11/QCR10 and a cleavage product of UQCRFS1). This cytochrome bc1 complex then forms a dimer. It depends on heme b as a cofactor.

Its subcellular location is the mitochondrion inner membrane. Its function is as follows. Component of the ubiquinol-cytochrome c reductase complex (complex III or cytochrome b-c1 complex) that is part of the mitochondrial respiratory chain. The b-c1 complex mediates electron transfer from ubiquinol to cytochrome c. Contributes to the generation of a proton gradient across the mitochondrial membrane that is then used for ATP synthesis. The chain is Cytochrome b (MT-CYB) from Amazilia tzacatl (Rufous-tailed hummingbird).